Reading from the N-terminus, the 514-residue chain is CENP-B homolog protein 1 (514 aa).

In terms of domain architecture, HTH CENPB-type spans 69-144 (DIKKIRAPKF…RRRHYIQQSA (76 aa)).

Its subcellular location is the nucleus. The protein localises to the chromosome. The protein resides in the centromere. In terms of biological role, binds to centromeric K-type repeat DNA and ARS3002 DNA. The CBH-binding consensus sequence is Py-Pu-A-T-A-T-Py-Pu-T-A. The sequence is that of CENP-B homolog protein 1 (cbh1) from Schizosaccharomyces pombe (strain 972 / ATCC 24843) (Fission yeast).